The following is a 920-amino-acid chain: Vacuolar membrane protease (920 aa).

Residues 1–20 lie on the Cytoplasmic side of the membrane; that stretch reads MASSRAQRFNPIAFTPWPVT. The chain crosses the membrane as a helical span at residues 21 to 41; the sequence is CITTIVYLALLIPILVINLVV. Residues 42–378 lie on the Vacuolar side of the membrane; sequence PSAPETNPKG…AFAVFRLHTL (337 aa). N-linked (GlcNAc...) asparagine glycans are attached at residues Asn53, Asn116, and Asn119. Zn(2+)-binding residues include His175 and Asp187. Catalysis depends on Glu221, which acts as the Proton acceptor. A Zn(2+)-binding site is contributed by Glu222. A glycan (N-linked (GlcNAc...) asparagine) is linked at Asn238. Zn(2+)-binding residues include Glu247 and His306. A helical transmembrane segment spans residues 379 to 399; the sequence is FAISVALLVIAPLVIFITSVI. The Cytoplasmic segment spans residues 400-433; that stretch reads LSKTDRMYLFSMSKSLEGTGDQVSLRGLRGFSRT. A helical transmembrane segment spans residues 434-454; it reads PIILVIATTIPICLAYLLEKV. At 455-463 the chain is on the vacuolar side; sequence NPYIVHSSQ. A helical transmembrane segment spans residues 464–484; it reads FSVWSMMFSAWIFLAWFLACA. Residues 485–495 lie on the Cytoplasmic side of the membrane; the sequence is ADFFRPSALHR. A helical transmembrane segment spans residues 496–516; that stretch reads AYSYTWIFVATWIMLVINTVY. Residues 517-520 lie on the Vacuolar side of the membrane; that stretch reads ANQK. The chain crosses the membrane as a helical span at residues 521-541; it reads GIAAGYFLLFYFAGAFLATWI. The Cytoplasmic segment spans residues 542 to 659; that stretch reads SYLELFALPR…TLPRWTWVLQ (118 aa). Residues 556–605 form a disordered region; that stretch reads ARQTTGRRPSSLSSRLLTSSADELRSNASPSTAEFPGAAGEDTDPTESTS. Low complexity predominate over residues 559 to 575; sequence TTGRRPSSLSSRLLTSS. A helical membrane pass occupies residues 660-680; that stretch reads LLLLAPIVLILVGQLALFLTA. Residues 681-693 are Vacuolar-facing; it reads SMCQVGSDGVSTF. The chain crosses the membrane as a helical span at residues 694–714; that stretch reads VVYLACAVFTTLLCIPLFPLI. The Cytoplasmic segment spans residues 715 to 720; it reads HRFTYH. The helical transmembrane segment at 721–741 threads the bilayer; that stretch reads IPTFLFLVFIGTLIYNLVAFP. Over 742–920 the chain is Vacuolar; it reads FSPANRLKTF…VEASHSFTIQ (179 aa). N-linked (GlcNAc...) asparagine glycosylation is found at Asn760, Asn788, and Asn832.

The protein belongs to the peptidase M28 family. Requires Zn(2+) as cofactor.

It localises to the vacuole membrane. Its function is as follows. May be involved in vacuolar sorting and osmoregulation. In Ajellomyces capsulatus (strain H143) (Darling's disease fungus), this protein is Vacuolar membrane protease.